We begin with the raw amino-acid sequence, 305 residues long: Ornithine carbamoyltransferase (305 aa).

Residues 54–57 (STRT), glutamine 81, arginine 105, and 132–135 (HPCQ) each bind carbamoyl phosphate. L-ornithine-binding positions include asparagine 163, aspartate 223, and 227 to 228 (SM). Carbamoyl phosphate-binding positions include 262 to 263 (CL) and arginine 290.

Belongs to the aspartate/ornithine carbamoyltransferase superfamily. OTCase family.

Its subcellular location is the cytoplasm. It catalyses the reaction carbamoyl phosphate + L-ornithine = L-citrulline + phosphate + H(+). Its pathway is amino-acid biosynthesis; L-arginine biosynthesis; L-arginine from L-ornithine and carbamoyl phosphate: step 1/3. Its function is as follows. Reversibly catalyzes the transfer of the carbamoyl group from carbamoyl phosphate (CP) to the N(epsilon) atom of ornithine (ORN) to produce L-citrulline. This is Ornithine carbamoyltransferase from Agrobacterium fabrum (strain C58 / ATCC 33970) (Agrobacterium tumefaciens (strain C58)).